We begin with the raw amino-acid sequence, 309 residues long: MTSDDTVRPGRPRSIETLAELTPEQTDAVLALLTEAARTDGQHAVSEQGRLQLRGPAREGVVHLLLTLDGGELVGYAQLEGTDPVEPPAAELVVHPSHRGQGHGRALGSALLAASGKRLRIWAHGGHSAARHLAQVLGLSLFRELRQLRRPLTGLDLPEPRLPEGVSVRTFVPGQDDAAWLAVNAAAFAHHPEQGSLTQRDLDDRKAEPWFDPAGFFLAERDGELIGFHWTKVHAEERLGEVYVLGIRPDTQGGGLGKALTTIGLRHLEGQGLPTAMLYVDADNKAAVAVYERLGFVTHETDLMYRTET.

N-acetyltransferase domains lie at 16–158 and 166–309; these read ETLA…LDLP and VSVR…RTET. 1D-myo-inositol 2-(L-cysteinylamino)-2-deoxy-alpha-D-glucopyranoside is bound at residue Glu-47. 92–94 lines the acetyl-CoA pocket; the sequence is LVV. 3 residues coordinate 1D-myo-inositol 2-(L-cysteinylamino)-2-deoxy-alpha-D-glucopyranoside: Glu-193, Lys-232, and Glu-241. Acetyl-CoA is bound by residues 245–247 and 252–258; these read LGI and QGGGLGK. Position 279 (Tyr-279) interacts with 1D-myo-inositol 2-(L-cysteinylamino)-2-deoxy-alpha-D-glucopyranoside.

It belongs to the acetyltransferase family. MshD subfamily. Monomer.

The catalysed reaction is 1D-myo-inositol 2-(L-cysteinylamino)-2-deoxy-alpha-D-glucopyranoside + acetyl-CoA = mycothiol + CoA + H(+). In terms of biological role, catalyzes the transfer of acetyl from acetyl-CoA to desacetylmycothiol (Cys-GlcN-Ins) to form mycothiol. This Streptomyces coelicolor (strain ATCC BAA-471 / A3(2) / M145) protein is Mycothiol acetyltransferase.